A 336-amino-acid chain; its full sequence is dTDP-glucose 4,6-dehydratase (336 aa).

Residues 7–13 (GGAGFIG), 37–40 (DKLT), and 63–64 (DI) each bind NAD(+). Thr-87 is a substrate binding site. Residue Thr-102 participates in NAD(+) binding. 127-129 (TDE) lines the substrate pocket. The active-site Proton donor is Asp-128. Catalysis depends on proton acceptor residues Glu-129 and Tyr-151. Position 151–155 (151–155 (YAAAK)) interacts with NAD(+). Asn-180 provides a ligand contact to substrate. Asn-181 is a binding site for NAD(+). Residues 190–191 (KL), 206–208 (PVY), Arg-215, Asn-250, and 274–277 (RPGH) contribute to the substrate site.

This sequence belongs to the NAD(P)-dependent epimerase/dehydratase family. dTDP-glucose dehydratase subfamily. Homodimer. It depends on NAD(+) as a cofactor.

The enzyme catalyses dTDP-alpha-D-glucose = dTDP-4-dehydro-6-deoxy-alpha-D-glucose + H2O. It functions in the pathway antibiotic biosynthesis; novobiocin biosynthesis. DTDP-glucose 4,6-dehydratase involved in the generation of the deoxysugar in the novobiocin biosynthesis pathway, an aminocoumarin family antibiotic that targets bacterial DNA gyrases. This Streptomyces niveus (Streptomyces spheroides) protein is dTDP-glucose 4,6-dehydratase (novT).